The chain runs to 270 residues: Monofunctional glycosyltransferase (270 aa).

A compositionally biased stretch (polar residues) spans 1 to 10 (MKRSQRMNNS). Residues 1–36 (MKRSQRMNNSPERHSQYRNEPHYNTYYQPVGKPPKK) are disordered. Basic and acidic residues predominate over residues 11 to 21 (PERHSQYRNEP). The chain crosses the membrane as a helical span at residues 42-62 (IFLRLFIIFVFIYALFIGLMY).

Belongs to the glycosyltransferase 51 family.

The protein localises to the cell membrane. The catalysed reaction is [GlcNAc-(1-&gt;4)-Mur2Ac(oyl-L-Ala-gamma-D-Glu-L-Lys-D-Ala-D-Ala)](n)-di-trans,octa-cis-undecaprenyl diphosphate + beta-D-GlcNAc-(1-&gt;4)-Mur2Ac(oyl-L-Ala-gamma-D-Glu-L-Lys-D-Ala-D-Ala)-di-trans,octa-cis-undecaprenyl diphosphate = [GlcNAc-(1-&gt;4)-Mur2Ac(oyl-L-Ala-gamma-D-Glu-L-Lys-D-Ala-D-Ala)](n+1)-di-trans,octa-cis-undecaprenyl diphosphate + di-trans,octa-cis-undecaprenyl diphosphate + H(+). It participates in cell wall biogenesis; peptidoglycan biosynthesis. Peptidoglycan polymerase that catalyzes glycan chain elongation using lipid-linked disaccharide-pentapeptide as the substrate. The chain is Monofunctional glycosyltransferase from Staphylococcus haemolyticus (strain JCSC1435).